The primary structure comprises 554 residues: L-ascorbate oxidase homolog (554 aa).

Residues 1-21 form the signal peptide; the sequence is MGSGKVTFVALLLCLSVGVIA. Plastocyanin-like domains are found at residues 22 to 143 and 196 to 296; these read EDPY…LNVH and SAKV…AIIR. Residues Asn-31, Asn-59, and Asn-108 are each glycosylated (N-linked (GlcNAc...) asparagine). The cysteines at positions 101 and 540 are disulfide-linked. N-linked (GlcNAc...) asparagine glycans are attached at residues Asn-332, Asn-352, and Asn-423. The Plastocyanin-like 3 domain occupies 411 to 521; it reads DPSKLTIATN…LGEQLYFSVL (111 aa).

The protein belongs to the multicopper oxidase family. Pollen.

The protein localises to the secreted. The protein resides in the extracellular space. In terms of biological role, probable oxidoreductase that may be involved in pollen tube growth. In Nicotiana tabacum (Common tobacco), this protein is L-ascorbate oxidase homolog.